Consider the following 322-residue polypeptide: MYTTSKNNTNYSKNLYLSSNKTKQEIFRYLNSTGINLHTKFEIISNESDLNYIRDNEYIICPKYSGVRSWVIFFKNDNDVYYAVSFPKYGRFKKEEFSIFPIDVSVTKQLYYGTIMEGIYFKMDNKKCLIIDEVYQFAGEHMLLKTKRDRLEFLQEKFKTTVVMTPNYGLYVSAYFYPDKENIKELYNNIKNNMSIQEIIFYPNIYGKKVYSYMITETDLVDNIIKLAQLYLEKTASPDVYNLYRINSDKKIDIAYIPDIETSRKCKQWFKDSKEKKLLVRCKMDMNIKKWIPQEIIENNEILLESENESENESENESEYDE.

This is an uncharacterized protein from Acanthamoeba polyphaga (Amoeba).